A 197-amino-acid polypeptide reads, in one-letter code: Ribosome maturation factor RimM (197 aa).

In terms of domain architecture, PRC barrel spans 99 to 174 (EDEFYQVDLI…LVVEPVAAGL (76 aa)).

The protein belongs to the RimM family. In terms of assembly, binds ribosomal protein uS19.

It localises to the cytoplasm. An accessory protein needed during the final step in the assembly of 30S ribosomal subunit, possibly for assembly of the head region. Essential for efficient processing of 16S rRNA. May be needed both before and after RbfA during the maturation of 16S rRNA. It has affinity for free ribosomal 30S subunits but not for 70S ribosomes. This Bartonella quintana (strain Toulouse) (Rochalimaea quintana) protein is Ribosome maturation factor RimM.